The primary structure comprises 219 residues: Large ribosomal subunit protein uL1 (219 aa).

Belongs to the universal ribosomal protein uL1 family. In terms of assembly, part of the 50S ribosomal subunit.

Probably involved in E site tRNA release. Binds directly to 23S rRNA. Its function is as follows. Protein L1 is also a translational repressor protein, it controls the translation of its operon by binding to its mRNA. This is Large ribosomal subunit protein uL1 from Methanocaldococcus jannaschii (strain ATCC 43067 / DSM 2661 / JAL-1 / JCM 10045 / NBRC 100440) (Methanococcus jannaschii).